The sequence spans 324 residues: Rho crystallin (324 aa).

N-acetylthreonine is present on T2. Residue 218 to 281 participates in NADP(+) binding; that stretch reads SVLGSHRDRN…SFTPARIKQN (64 aa).

Belongs to the aldo/keto reductase family. In terms of assembly, monomer.

The sequence is that of Rho crystallin from Aquarana catesbeiana (American bullfrog).